Here is a 316-residue protein sequence, read N- to C-terminus: MKSISYLNTKEKNKKKLSIPSKTIFAKENEYGLKKPNWLKIKLPLNNKKINKIKLIMRKNNLHTVCEEAACPNLAECFNRGTATFMILGSICTRRCPFCNVSSGRPSLVDTKEPENLSKAAIKMKLKHIVITSVDRDDLKDGGSEHFSNCIRFIRKKNPDIKIEILVPDFRGCTELALNNISTYPPDIFNHNLESIPRLYSKVRPGANYKRSLELLEKFNLINPNIPTKSGLMLGLGETKEEIIEVMKDLRKSYVSMITIGQYLRPTKNHLTVNRYVHPKEFRELNLIAFDLGFKHAMCGPLVRSSYHAENQINCY.

The [4Fe-4S] cluster site is built by C66, C71, C77, C92, C96, C99, and S306. The 218-residue stretch at 78–295 folds into the Radical SAM core domain; the sequence is FNRGTATFMI…NLIAFDLGFK (218 aa).

It belongs to the radical SAM superfamily. Lipoyl synthase family. The cofactor is [4Fe-4S] cluster.

The protein localises to the cytoplasm. The enzyme catalyses [[Fe-S] cluster scaffold protein carrying a second [4Fe-4S](2+) cluster] + N(6)-octanoyl-L-lysyl-[protein] + 2 oxidized [2Fe-2S]-[ferredoxin] + 2 S-adenosyl-L-methionine + 4 H(+) = [[Fe-S] cluster scaffold protein] + N(6)-[(R)-dihydrolipoyl]-L-lysyl-[protein] + 4 Fe(3+) + 2 hydrogen sulfide + 2 5'-deoxyadenosine + 2 L-methionine + 2 reduced [2Fe-2S]-[ferredoxin]. Its pathway is protein modification; protein lipoylation via endogenous pathway; protein N(6)-(lipoyl)lysine from octanoyl-[acyl-carrier-protein]: step 2/2. Its function is as follows. Catalyzes the radical-mediated insertion of two sulfur atoms into the C-6 and C-8 positions of the octanoyl moiety bound to the lipoyl domains of lipoate-dependent enzymes, thereby converting the octanoylated domains into lipoylated derivatives. The polypeptide is Lipoyl synthase (Wigglesworthia glossinidia brevipalpis).